The sequence spans 287 residues: uncharacterized protein (287 aa).

One can recognise an ATP-grasp domain in the interval 115–287 (PQNFDREWNP…NLAIELLKAI (173 aa)). Residues Lys145 and 178-188 (QKYITCSKGES) each bind ATP. Positions 248, 261, and 263 each coordinate Mg(2+). Positions 248, 261, and 263 each coordinate Mn(2+).

It belongs to the RimK family.

This is an uncharacterized protein from Mycoplasma genitalium (strain ATCC 33530 / DSM 19775 / NCTC 10195 / G37) (Mycoplasmoides genitalium).